A 195-amino-acid polypeptide reads, in one-letter code: Elongation factor Ts (195 aa).

An involved in Mg(2+) ion dislocation from EF-Tu region spans residues 81–84 (TDFV).

This sequence belongs to the EF-Ts family.

It is found in the cytoplasm. In terms of biological role, associates with the EF-Tu.GDP complex and induces the exchange of GDP to GTP. It remains bound to the aminoacyl-tRNA.EF-Tu.GTP complex up to the GTP hydrolysis stage on the ribosome. The polypeptide is Elongation factor Ts (Rubrobacter xylanophilus (strain DSM 9941 / JCM 11954 / NBRC 16129 / PRD-1)).